The sequence spans 324 residues: MQALLLEQQDGKTLASVQTLDESRLPEGDVTVDVHWSSLNYKDALAITGKGKIIRNFPMIPGIDFAGTVRTSEDPRFHAGQEVLLTGWGVGENHWGGLAEQARVKGDWLVAMPQGLDARKAMIIGTAGFTAMLCVMALEDAGVRPQDGEIVVTGASGGVGSTAVALLHKLGYQVVAVSGRESTHEYLKSLGASRVLPRDEFAESRPLEKQVWAGAIDTVGDKVLAKVLAQMNYGGCVAACGLAGGFTLPTTVMPFILRNVRLQGVDSVMTPPERRAQAWQRLVADLPESFYTQAAKEISLSEAPNFAEAIINNQIQGRTLVKVN.

Residues Y41, 156–159 (SGGV), 178–180 (SGR), R198, L242, I256, S267, and N313 each bind NADP(+).

The protein belongs to the zinc-containing alcohol dehydrogenase family. Acrylyl-CoA reductase subfamily. In terms of assembly, homodimer.

The protein localises to the cytoplasm. It catalyses the reaction propanoyl-CoA + NADP(+) = acryloyl-CoA + NADPH + H(+). In terms of biological role, probably catalyzes the NADPH-dependent reduction of acrylyl-CoA to propanoyl-CoA. The polypeptide is Probable acrylyl-CoA reductase AcuI (acuI) (Escherichia coli (strain K12)).